The chain runs to 439 residues: Glucose-1-phosphate adenylyltransferase (439 aa).

Alpha-D-glucose 1-phosphate is bound by residues Tyr116, Gly182, 197-198 (EK), and Ser215.

Belongs to the bacterial/plant glucose-1-phosphate adenylyltransferase family. Homotetramer.

The catalysed reaction is alpha-D-glucose 1-phosphate + ATP + H(+) = ADP-alpha-D-glucose + diphosphate. Its pathway is glycan biosynthesis; glycogen biosynthesis. In terms of biological role, involved in the biosynthesis of ADP-glucose, a building block required for the elongation reactions to produce glycogen. Catalyzes the reaction between ATP and alpha-D-glucose 1-phosphate (G1P) to produce pyrophosphate and ADP-Glc. This is Glucose-1-phosphate adenylyltransferase from Pasteurella multocida (strain Pm70).